A 289-amino-acid chain; its full sequence is MEVGFLGLGIMGKAMSMNLLKNGFKVTVWNRTLSKCDELVEHGASVCESPAEVIKKCKYTIAMLSDPCAALSVVFDKGGVLEQICEGKGYIDMSTVDAETSLKINEAITGKGGRFVEGPVSGSKKPAEDGQLIILAAGDKALFEESIPAFDVLGKRSFYLGQVGNGAKMKLIVNMIMGSMMNAFSEGLVLADKSGLSSDTLLDILDLGAMTNPMFKGKGPSMNKSSYPPAFPLKHQQKDMRLALALGDENAVSMPVAAAANEAFKKARSLGLGDLDFSAVIEAVKFSRE.

Position 1 is an N-acetylmethionine (methionine 1). Residues 4–18 (GFLG…MSMN) and threonine 95 each bind NADP(+). Lysine 170 is an active-site residue. Lysine 238 is an NADP(+) binding site.

The protein belongs to the HIBADH-related family. NP60 subfamily.

It localises to the cytoplasm. It is found in the cytosol. It catalyses the reaction glycolate + NADP(+) = glyoxylate + NADPH + H(+). The catalysed reaction is 4-hydroxybutanoate + NADP(+) = succinate semialdehyde + NADPH + H(+). With respect to regulation, the ratio of NADPH/NADP(+) may regulate enzymatic activity. Catalyzes the NADPH-dependent reduction of glyoxylate to glycolate as well as succinic semialdehyde (SSA) to gamma-hydroxybutyrate in vitro. May function in redox homeostasis and play a role in oxidative stress tolerance by detoxifying glyoxylate and SSA generated in glycolate metabolism and GABA metabolism, respectively. This is Glyoxylate/succinic semialdehyde reductase 1 (GLYR1) from Arabidopsis thaliana (Mouse-ear cress).